A 205-amino-acid polypeptide reads, in one-letter code: Ribosomal RNA large subunit methyltransferase E (205 aa).

S-adenosyl-L-methionine contacts are provided by Gly-60, Trp-62, Asp-80, Asp-96, and Asp-121. The Proton acceptor role is filled by Lys-161.

The protein belongs to the class I-like SAM-binding methyltransferase superfamily. RNA methyltransferase RlmE family.

Its subcellular location is the cytoplasm. The enzyme catalyses uridine(2552) in 23S rRNA + S-adenosyl-L-methionine = 2'-O-methyluridine(2552) in 23S rRNA + S-adenosyl-L-homocysteine + H(+). Its function is as follows. Specifically methylates the uridine in position 2552 of 23S rRNA at the 2'-O position of the ribose in the fully assembled 50S ribosomal subunit. This is Ribosomal RNA large subunit methyltransferase E from Azoarcus sp. (strain BH72).